Consider the following 53-residue polypeptide: ATP synthase protein 8 (53 aa).

A helical transmembrane segment spans residues 4-24 (MAPISWLLLFIIFSITFILFC).

The protein belongs to the ATPase protein 8 family. In terms of assembly, F-type ATPases have 2 components, CF(1) - the catalytic core - and CF(0) - the membrane proton channel.

It localises to the mitochondrion membrane. In terms of biological role, mitochondrial membrane ATP synthase (F(1)F(0) ATP synthase or Complex V) produces ATP from ADP in the presence of a proton gradient across the membrane which is generated by electron transport complexes of the respiratory chain. F-type ATPases consist of two structural domains, F(1) - containing the extramembraneous catalytic core and F(0) - containing the membrane proton channel, linked together by a central stalk and a peripheral stalk. During catalysis, ATP synthesis in the catalytic domain of F(1) is coupled via a rotary mechanism of the central stalk subunits to proton translocation. Part of the complex F(0) domain. Minor subunit located with subunit a in the membrane. The chain is ATP synthase protein 8 (mt:ATPase8) from Drosophila sechellia (Fruit fly).